Consider the following 90-residue polypeptide: MANHKSALKRVRQTKKRTERNRFYRTRMKNIIKDVKEAVASGNKAAAIEALKVANKRIHEYVSKGIIKKNNAARKVSKLHKLVNSMNEAA.

The segment at 1–21 is disordered; it reads MANHKSALKRVRQTKKRTERN.

The protein belongs to the bacterial ribosomal protein bS20 family.

Functionally, binds directly to 16S ribosomal RNA. In Nitratiruptor sp. (strain SB155-2), this protein is Small ribosomal subunit protein bS20.